We begin with the raw amino-acid sequence, 400 residues long: Cytohesin-2 (400 aa).

A coiled-coil region spans residues 10-63 (DLTPEERMELENIRRRKQELLVEIQRLREELSEAMSEVEGLEANEGSKTLQRNR). Residues 72 to 201 (FNMDPKKGIQ…VIMLNTSLHN (130 aa)) form the SEC7 domain. One can recognise a PH domain in the interval 259-376 (NPDREGWLLK…WIKSIQAAVS (118 aa)). Residues 268–276 (KLGGGRVKT), arginine 280, tyrosine 291, arginine 301, lysine 339, asparagine 350, and histidine 351 each bind a 1,2-diacyl-sn-glycero-3-phospho-(1D-myo-inositol-3,4,5-trisphosphate). The tract at residues 387-395 (RKKRISVKK) is C-terminal autoinhibitory region.

As to quaternary structure, heteromer. Composed of TAMALIN, CYTH2 and at least one GRM1. Interacts with ARRB1. Interacts with ARL4D; the interaction is direct. Directly interacts with CCDC120 through the coiled coil domain; this interaction stabilizes CCDC120, possibly by preventing its ubiquitination, and is required for neurite growth in neuroblastoma cells. Interacts with ARF1. Interacts with FRMD4A. Interacts (via N-terminal domain) with INAVA (via N-terminal domain). Widely expressed.

Its subcellular location is the cell membrane. The protein localises to the cytoplasm. The protein resides in the cell projection. It is found in the growth cone. It localises to the cell junction. Its subcellular location is the tight junction. The protein localises to the adherens junction. Its function is as follows. Acts as a guanine-nucleotide exchange factor (GEF). Promotes guanine-nucleotide exchange on ARF1, ARF3 and ARF6. Activates ARF factors through replacement of GDP with GTP. The cell membrane form, in association with ARL4 proteins, recruits ARF6 to the plasma membrane. Involved in neurite growth. The sequence is that of Cytohesin-2 from Homo sapiens (Human).